The primary structure comprises 504 residues: MTTFTKLSEQEAPGISIHPDRRISKINPNIYAGFAEHMGRCIYGGIYDPGNPLSDENGFRKDVLEALKELKVPVIRYPGGNFTATYHWIDGVGPRDQRPARPELAWLGTETNQFGTDEFLKWCEVLGTEPYLCLNMGTGTLDEALAWVDYCNGTRDTYYANLRRKNGREEPYNVKYWALGNEVWGPWQVEQSTKEEYAHKAYQWAKALKLLDPSIELILCGKEGPTSWDYYTLKQTMLPVHSPLSTSAVPLIDMHSIHLYTAHSSHLPNVTAPLAAERAIEITSSLIDLARVENGVPPEQRRPTICFDEWNVWDPIRAEGSKGAEESYNLSDALAVGVWLNVFVRKSKDVGMACIAQSVNVISPLMTTKDGIVKQTTWWPLYLFSNYMRGWTISAHISVSAYEGETHPKWVRGVKDTPWLDVSATLGEDGYVNVVVINIHEEKGIEAKLDGPSGEVTVFTVTGDNPAVTNMKGKEEVGLVETKWDAQGPYVFPKHSLTLLRWKA.

N-linked (GlcNAc...) asparagine glycosylation is found at asparagine 81, asparagine 152, asparagine 269, and asparagine 329.

Belongs to the glycosyl hydrolase 51 family.

It is found in the secreted. The catalysed reaction is Hydrolysis of terminal non-reducing alpha-L-arabinofuranoside residues in alpha-L-arabinosides.. It functions in the pathway glycan metabolism; L-arabinan degradation. In terms of biological role, alpha-L-arabinofuranosidase involved in the degradation of arabinoxylan, a major component of plant hemicellulose. Acts only on small linear 1,5-alpha-linked L-arabinofuranosyl oligosaccharides. The chain is Alpha-L-arabinofuranosidase C (abfC) from Emericella nidulans (strain FGSC A4 / ATCC 38163 / CBS 112.46 / NRRL 194 / M139) (Aspergillus nidulans).